Here is a 331-residue protein sequence, read N- to C-terminus: Terpene synthase 8 (331 aa).

The short motif at 97–102 is the DDxx(x)D/E motif element; sequence DDFYLE. The short motif at 228 to 236 is the NDxxSxxxD/E motif element; sequence NDIYSFNKE.

It belongs to the terpene synthase family.

Its function is as follows. Terpene synthase that converts its substrate farnesyl diphosphate (FPP) into several yet unidentified sesquiterpenes. The protein is Terpene synthase 8 of Dictyostelium purpureum (Slime mold).